A 207-amino-acid chain; its full sequence is Large ribosomal subunit protein bL25 (207 aa).

This sequence belongs to the bacterial ribosomal protein bL25 family. CTC subfamily. In terms of assembly, part of the 50S ribosomal subunit; part of the 5S rRNA/L5/L18/L25 subcomplex. Contacts the 5S rRNA. Binds to the 5S rRNA independently of L5 and L18.

Functionally, this is one of the proteins that binds to the 5S RNA in the ribosome where it forms part of the central protuberance. The sequence is that of Large ribosomal subunit protein bL25 from Orientia tsutsugamushi (strain Boryong) (Rickettsia tsutsugamushi).